The chain runs to 287 residues: Pyridoxal kinase PdxY (287 aa).

Substrate contacts are provided by residues Ser-9 and 44–45; that span reads MQ. Positions 111, 142, 147, and 180 each coordinate ATP. Asp-221 contributes to the substrate binding site.

It belongs to the pyridoxine kinase family. PdxY subfamily. As to quaternary structure, homodimer. Mg(2+) is required as a cofactor.

It carries out the reaction pyridoxal + ATP = pyridoxal 5'-phosphate + ADP + H(+). It participates in cofactor metabolism; pyridoxal 5'-phosphate salvage; pyridoxal 5'-phosphate from pyridoxal: step 1/1. Pyridoxal kinase involved in the salvage pathway of pyridoxal 5'-phosphate (PLP). Catalyzes the phosphorylation of pyridoxal to PLP. The protein is Pyridoxal kinase PdxY of Burkholderia thailandensis (strain ATCC 700388 / DSM 13276 / CCUG 48851 / CIP 106301 / E264).